We begin with the raw amino-acid sequence, 80 residues long: RNA-binding protein Hfq (80 aa).

One can recognise a Sm domain in the interval 9-69; sequence DVFLNQVRKE…ISTILPITPI (61 aa).

This sequence belongs to the Hfq family. Homohexamer.

In terms of biological role, RNA chaperone that binds small regulatory RNA (sRNAs) and mRNAs to facilitate mRNA translational regulation in response to envelope stress, environmental stress and changes in metabolite concentrations. Also binds with high specificity to tRNAs. This chain is RNA-binding protein Hfq, found in Alkaliphilus metalliredigens (strain QYMF).